Consider the following 309-residue polypeptide: MPTASMTPNPFLSGSPEHAAAAGPLAAFAALPTGMQLAFAIVLGLVVGSFINVVVHRLPIMMKRAWLAEIAEATGAPCADDGLPARYNLCVPRSACPHCGHALRAWENVPVLSYIALRGRCRHCRTPIGARYPLIELASGALAAGALALFGPSGAALAAFGLCAALLAMSAIDMQTGFLPDSLTLPLLWAGLCVNLWGTFASLRAAVIGAIAGYLFLWCILWLFKLLRGIEGIGYGDLKLLAALGAWLGWEALPQVVLIAAVAGAAVGLVATWRGRMRFEEPLPFGPFLAAGGAATLFFGTPFYLLLGG.

Residues 35–55 (MQLAFAIVLGLVVGSFINVVV) traverse the membrane as a helical segment. Positions 96, 99, 121, and 124 each coordinate Zn(2+). Transmembrane regions (helical) follow at residues 147–167 (LALF…AALL), 183–203 (LTLP…FASL), 207–227 (VIGA…FKLL), 230–250 (IEGI…WLGW), 253–273 (LPQV…VATW), and 288–308 (FLAA…LLLG).

Belongs to the peptidase A24 family. The cofactor is Zn(2+).

It localises to the cell inner membrane. The catalysed reaction is Typically cleaves a -Gly-|-Phe- bond to release an N-terminal, basic peptide of 5-8 residues from type IV prepilin, and then N-methylates the new N-terminal amino group, the methyl donor being S-adenosyl-L-methionine.. Plays an essential role in type IV pili and type II pseudopili formation by proteolytically removing the leader sequence from substrate proteins and subsequently monomethylating the alpha-amino group of the newly exposed N-terminal phenylalanine. In Burkholderia pseudomallei (strain K96243), this protein is Prepilin leader peptidase/N-methyltransferase (gspO).